The following is a 569-amino-acid chain: 4-hydroxy-7-methoxy-3-oxo-3,4-dihydro-2H-1,4-benzoxazin-2-yl glucoside beta-D-glucosidase 1b, chloroplastic (569 aa).

A chloroplast-targeting transit peptide spans 1–50 (MALLAAATLNPTTHLSLRSRAGRNSENLWLRSTASSQKSKGRFCNLTIRA). Residues Q92, H194, and 239-240 (NE) contribute to the a beta-D-glucoside site. E240 functions as the Proton donor in the catalytic mechanism. C259 and C265 are disulfide-bonded. Residues Y383, E456, W504, 511-512 (EW), and F520 contribute to the a beta-D-glucoside site. E456 serves as the catalytic Nucleophile.

The protein belongs to the glycosyl hydrolase 1 family. In terms of assembly, homo- and heterohexamers. In terms of tissue distribution, expressed in young seedlings early after germination.

It localises to the plastid. The protein localises to the chloroplast. It catalyses the reaction Hydrolysis of terminal, non-reducing beta-D-glucosyl residues with release of beta-D-glucose.. The enzyme catalyses DIMBOA beta-D-glucoside + H2O = DIMBOA + D-glucose. It carries out the reaction DIBOA beta-D-glucoside + H2O = DIBOA + D-glucose. Functionally, acts in defense of young plant parts against pests via the production of hydroxamic acids from hydroxamic acid glucosides. Enzymatic activity is highly correlated with plant growth. The preferred substrate is DIMBOA-beta-D-glucoside. The sequence is that of 4-hydroxy-7-methoxy-3-oxo-3,4-dihydro-2H-1,4-benzoxazin-2-yl glucoside beta-D-glucosidase 1b, chloroplastic (GLU1B) from Triticum aestivum (Wheat).